Here is a 199-residue protein sequence, read N- to C-terminus: Recombination protein RecR (199 aa).

The C4-type zinc finger occupies 57-72 (CSICGNITDKDPCYVC). Residues 80–176 (TIVCVVQDSR…RVTRIAHGLP (97 aa)) form the Toprim domain.

Belongs to the RecR family.

In terms of biological role, may play a role in DNA repair. It seems to be involved in an RecBC-independent recombinational process of DNA repair. It may act with RecF and RecO. This Exiguobacterium sibiricum (strain DSM 17290 / CCUG 55495 / CIP 109462 / JCM 13490 / 255-15) protein is Recombination protein RecR.